A 326-amino-acid chain; its full sequence is Transformer-2 protein homolog (326 aa).

Disordered regions lie at residues 1 to 114 (MEVA…PSNV) and 179 to 326 (LHGK…SYRR). A compositionally biased stretch (basic and acidic residues) spans 38–55 (RDSRERSPPRGNSRERSP). Residues 56–85 (PRGGSPNRGGSPNRGGSPNRGGSPNRGGSP) show a composition bias toward low complexity. The segment covering 104–113 (RLANTASPSN) has biased composition (polar residues). One can recognise an RRM domain in the interval 113–191 (NVLGVFGLAP…KSIRTDFSAT (79 aa)). The segment covering 220 to 239 (YGGGDRYGRGDYGGRGGGGD) has biased composition (gly residues). Residues 240–326 (RYGRDDRGGD…DERPRDSYRR (87 aa)) are compositionally biased toward basic and acidic residues.

It belongs to the splicing factor SR family.

The protein localises to the nucleus. In terms of biological role, sequence-specific RNA-binding protein which participates in the control of pre-mRNA splicing. This chain is Transformer-2 protein homolog (tra2), found in Dictyostelium discoideum (Social amoeba).